A 73-amino-acid chain; its full sequence is Large ribosomal subunit protein uL30 (73 aa).

This sequence belongs to the universal ribosomal protein uL30 family. In terms of assembly, part of the 50S ribosomal subunit.

This Borreliella afzelii (strain PKo) (Borrelia afzelii) protein is Large ribosomal subunit protein uL30.